Reading from the N-terminus, the 53-residue chain is Large ribosomal subunit protein eL40 (53 aa).

The protein belongs to the eukaryotic ribosomal protein eL40 family.

The protein is Large ribosomal subunit protein eL40 of Pyrobaculum islandicum (strain DSM 4184 / JCM 9189 / GEO3).